The chain runs to 220 residues: Apoptosis regulator BALF1 (220 aa).

The protein belongs to the Epstein-Barr virus BALF1 family. Interacts with BHRF1; this interaction modulates BHRF1 activity. Interacts with host BAX and BAK1.

The protein resides in the host cytoplasm. Modulates the antiapoptotic activity of the viral protein BHRF1. May also play an active part in oncogenesis in Burkitt's lymphomy and nasopharyngeal carcinoma. The sequence is that of Apoptosis regulator BALF1 from Homo sapiens (Human).